The following is a 106-amino-acid chain: Nucleoid-associated protein PD_1058 (106 aa).

The protein belongs to the YbaB/EbfC family. As to quaternary structure, homodimer.

The protein localises to the cytoplasm. Its subcellular location is the nucleoid. In terms of biological role, binds to DNA and alters its conformation. May be involved in regulation of gene expression, nucleoid organization and DNA protection. The chain is Nucleoid-associated protein PD_1058 from Xylella fastidiosa (strain Temecula1 / ATCC 700964).